We begin with the raw amino-acid sequence, 363 residues long: tRNA/tmRNA (uracil-C(5))-methyltransferase (363 aa).

Q187, Y215, N220, E236, and D296 together coordinate S-adenosyl-L-methionine. The active-site Nucleophile is C321. E355 (proton acceptor) is an active-site residue.

This sequence belongs to the class I-like SAM-binding methyltransferase superfamily. RNA M5U methyltransferase family. TrmA subfamily.

It catalyses the reaction uridine(54) in tRNA + S-adenosyl-L-methionine = 5-methyluridine(54) in tRNA + S-adenosyl-L-homocysteine + H(+). It carries out the reaction uridine(341) in tmRNA + S-adenosyl-L-methionine = 5-methyluridine(341) in tmRNA + S-adenosyl-L-homocysteine + H(+). Functionally, dual-specificity methyltransferase that catalyzes the formation of 5-methyluridine at position 54 (m5U54) in all tRNAs, and that of position 341 (m5U341) in tmRNA (transfer-mRNA). This Haemophilus influenzae (strain PittEE) protein is tRNA/tmRNA (uracil-C(5))-methyltransferase.